A 514-amino-acid chain; its full sequence is 2-isopropylmalate synthase (514 aa).

One can recognise a Pyruvate carboxyltransferase domain in the interval 5–267 (IYIFDTTLRD…HTDIVTEEIT (263 aa)). D14, H202, H204, and N238 together coordinate Mn(2+). The regulatory domain stretch occupies residues 392–514 (KLKYYQVFTG…SKDLQKISAN (123 aa)).

This sequence belongs to the alpha-IPM synthase/homocitrate synthase family. LeuA type 1 subfamily. Homodimer. Requires Mn(2+) as cofactor.

It localises to the cytoplasm. The enzyme catalyses 3-methyl-2-oxobutanoate + acetyl-CoA + H2O = (2S)-2-isopropylmalate + CoA + H(+). It participates in amino-acid biosynthesis; L-leucine biosynthesis; L-leucine from 3-methyl-2-oxobutanoate: step 1/4. Its function is as follows. Catalyzes the condensation of the acetyl group of acetyl-CoA with 3-methyl-2-oxobutanoate (2-ketoisovalerate) to form 3-carboxy-3-hydroxy-4-methylpentanoate (2-isopropylmalate). This is 2-isopropylmalate synthase from Clostridium kluyveri (strain NBRC 12016).